The following is a 361-amino-acid chain: tRNA-specific 2-thiouridylase MnmA (361 aa).

ATP contacts are provided by residues 11 to 18 (GMSGGVDS) and Met-37. The interval 97-99 (NPD) is interaction with target base in tRNA. The Nucleophile role is filled by Cys-102. A disulfide bridge links Cys-102 with Cys-199. Residue Gly-126 coordinates ATP. Residues 149–151 (KDQ) are interaction with tRNA. Residue Cys-199 is the Cysteine persulfide intermediate of the active site. The interval 311–312 (RY) is interaction with tRNA.

The protein belongs to the MnmA/TRMU family.

The protein localises to the cytoplasm. The catalysed reaction is S-sulfanyl-L-cysteinyl-[protein] + uridine(34) in tRNA + AH2 + ATP = 2-thiouridine(34) in tRNA + L-cysteinyl-[protein] + A + AMP + diphosphate + H(+). In terms of biological role, catalyzes the 2-thiolation of uridine at the wobble position (U34) of tRNA, leading to the formation of s(2)U34. This is tRNA-specific 2-thiouridylase MnmA from Cupriavidus necator (strain ATCC 17699 / DSM 428 / KCTC 22496 / NCIMB 10442 / H16 / Stanier 337) (Ralstonia eutropha).